A 257-amino-acid chain; its full sequence is 5'-nucleotidase SurE (257 aa).

A divalent metal cation-binding residues include D13, D14, S44, and N100.

The protein belongs to the SurE nucleotidase family. A divalent metal cation serves as cofactor.

The protein resides in the cytoplasm. It catalyses the reaction a ribonucleoside 5'-phosphate + H2O = a ribonucleoside + phosphate. In terms of biological role, nucleotidase that shows phosphatase activity on nucleoside 5'-monophosphates. The chain is 5'-nucleotidase SurE from Phocaeicola vulgatus (strain ATCC 8482 / DSM 1447 / JCM 5826 / CCUG 4940 / NBRC 14291 / NCTC 11154) (Bacteroides vulgatus).